A 199-amino-acid chain; its full sequence is NAD(P)H dehydrogenase (quinone) (199 aa).

Positions 4–190 (MLVLYYSAYG…DGARFQGRRV (187 aa)) constitute a Flavodoxin-like domain. Residues 10-15 (SAYGYM) and 78-80 (TRY) each bind FMN. Tyr12 contacts NAD(+). Trp98 is a substrate binding site. FMN is bound by residues 113–119 (STATQHG) and His134. The segment at 157–181 (GGAPYGMTTTADGDGSRQPSAQELD) is disordered. Positions 163 to 177 (MTTTADGDGSRQPSA) are enriched in polar residues.

Belongs to the WrbA family. FMN serves as cofactor.

It carries out the reaction a quinone + NADH + H(+) = a quinol + NAD(+). It catalyses the reaction a quinone + NADPH + H(+) = a quinol + NADP(+). The chain is NAD(P)H dehydrogenase (quinone) from Brucella melitensis biotype 2 (strain ATCC 23457).